We begin with the raw amino-acid sequence, 259 residues long: Glycerol-3-phosphate acyltransferase (259 aa).

7 helical membrane passes run 11 to 31, 62 to 82, 93 to 112, 124 to 144, 152 to 172, 188 to 208, and 211 to 231; these read IILASVVGYFLGSISWSIIIV, LVVAFLDALKVIFTSIIAILL, TSYFIPCIFALIGHCFPIYY, LGLLFVVNILYLIIFLIVWFI, VSVASIFSAFFVLIIMWIPYL, FSVAWKNYILFSLLNSFHYWF, and IWASGMLEGNIIVLIGGLILG.

It belongs to the PlsY family. In terms of assembly, probably interacts with PlsX.

Its subcellular location is the cell membrane. It catalyses the reaction an acyl phosphate + sn-glycerol 3-phosphate = a 1-acyl-sn-glycero-3-phosphate + phosphate. Its pathway is lipid metabolism; phospholipid metabolism. Functionally, catalyzes the transfer of an acyl group from acyl-phosphate (acyl-PO(4)) to glycerol-3-phosphate (G3P) to form lysophosphatidic acid (LPA). This enzyme utilizes acyl-phosphate as fatty acyl donor, but not acyl-CoA or acyl-ACP. The polypeptide is Glycerol-3-phosphate acyltransferase (Mycoplasma capricolum subsp. capricolum (strain California kid / ATCC 27343 / NCTC 10154)).